The primary structure comprises 101 residues: Apolipoprotein C-II (101 aa).

The signal sequence occupies residues Met1–Gly22. A propeptide spans Ala23–Gln28 (removed in mature form). The tract at residues Ala66–Leu74 is lipid binding. The lipoprotein lipase cofactor stretch occupies residues Ser78 to Glu101.

This sequence belongs to the apolipoprotein C2 family. Proapolipoprotein C-II is synthesized as a sialic acid containing glycoprotein which is subsequently desialylated prior to its proteolytic processing. Post-translationally, proapolipoprotein C-II, the major form found in plasma undergoes proteolytic cleavage of its N-terminal hexapeptide to generate apolipoprotein C-II, which occurs as the minor form in plasma.

The protein localises to the secreted. In terms of biological role, component of chylomicrons, very low-density lipoproteins (VLDL), low-density lipoproteins (LDL), and high-density lipoproteins (HDL) in plasma. Plays an important role in lipoprotein metabolism as an activator of lipoprotein lipase. Both proapolipoprotein C-II and apolipoprotein C-II can activate lipoprotein lipase. This Papio anubis (Olive baboon) protein is Apolipoprotein C-II (APOC2).